The sequence spans 240 residues: ATP-dependent dethiobiotin synthetase BioD (240 aa).

Position 15-20 (15-20 (EIGKTF)) interacts with ATP. T19 provides a ligand contact to Mg(2+). K40 is a catalytic residue. ATP contacts are provided by residues D57, 118–121 (EGVG), and 178–179 (NR). The Mg(2+) site is built by D57 and E118.

The protein belongs to the dethiobiotin synthetase family. As to quaternary structure, homodimer. Requires Mg(2+) as cofactor.

It is found in the cytoplasm. It carries out the reaction (7R,8S)-7,8-diammoniononanoate + CO2 + ATP = (4R,5S)-dethiobiotin + ADP + phosphate + 3 H(+). It participates in cofactor biosynthesis; biotin biosynthesis; biotin from 7,8-diaminononanoate: step 1/2. Catalyzes a mechanistically unusual reaction, the ATP-dependent insertion of CO2 between the N7 and N8 nitrogen atoms of 7,8-diaminopelargonic acid (DAPA, also called 7,8-diammoniononanoate) to form a ureido ring. The polypeptide is ATP-dependent dethiobiotin synthetase BioD (Burkholderia pseudomallei (strain K96243)).